The following is a 77-amino-acid chain: Large ribosomal subunit protein bL28 (77 aa).

Belongs to the bacterial ribosomal protein bL28 family.

The sequence is that of Large ribosomal subunit protein bL28 from Variovorax paradoxus (strain S110).